Reading from the N-terminus, the 356-residue chain is Photosynthetic reaction center cytochrome c subunit (356 aa).

Positions 1–20 (MKQLIVNSVATVALASLVAG) are cleaved as a signal peptide. C21 is lipidated: S-diacylglycerol cysteine. Heme-binding residues include M94, C107, C110, H111, M130, H144, C152, C155, H156, M253, C264, C267, H268, C325, C328, and H329.

Component of the photosynthetic reaction center composed of protein subunits L (PufL), M (PufM), H (PuhA) and cytochrome C (PufC). In terms of processing, binds 4 heme groups per subunit. After the signal sequence is removed, the N-terminal cysteine is modified to form a diacylglyceride thioether, but the alpha-amino group is free and is not N-palmitoylated.

Its subcellular location is the cellular chromatophore membrane. In terms of biological role, the reaction center of purple bacteria contains a tightly bound cytochrome molecule which re-reduces the photo oxidized primary electron donor. The sequence is that of Photosynthetic reaction center cytochrome c subunit from Blastochloris viridis (Rhodopseudomonas viridis).